Reading from the N-terminus, the 280-residue chain is Putative pyruvate, phosphate dikinase regulatory protein (280 aa).

An ADP-binding site is contributed by G153–T160.

Belongs to the pyruvate, phosphate/water dikinase regulatory protein family. PDRP subfamily.

The enzyme catalyses N(tele)-phospho-L-histidyl/L-threonyl-[pyruvate, phosphate dikinase] + ADP = N(tele)-phospho-L-histidyl/O-phospho-L-threonyl-[pyruvate, phosphate dikinase] + AMP + H(+). It carries out the reaction N(tele)-phospho-L-histidyl/O-phospho-L-threonyl-[pyruvate, phosphate dikinase] + phosphate + H(+) = N(tele)-phospho-L-histidyl/L-threonyl-[pyruvate, phosphate dikinase] + diphosphate. Functionally, bifunctional serine/threonine kinase and phosphorylase involved in the regulation of the pyruvate, phosphate dikinase (PPDK) by catalyzing its phosphorylation/dephosphorylation. This chain is Putative pyruvate, phosphate dikinase regulatory protein, found in Bartonella quintana (strain Toulouse) (Rochalimaea quintana).